Here is a 765-residue protein sequence, read N- to C-terminus: Probable beta-glucosidase M (765 aa).

The signal sequence occupies residues 1 to 19 (MHSISALLSLLGGLALSSA). 5 N-linked (GlcNAc...) asparagine glycosylation sites follow: asparagine 24, asparagine 71, asparagine 93, asparagine 126, and asparagine 258. Aspartate 286 is an active-site residue. 6 N-linked (GlcNAc...) asparagine glycosylation sites follow: asparagine 314, asparagine 321, asparagine 432, asparagine 519, asparagine 541, and asparagine 647.

The protein belongs to the glycosyl hydrolase 3 family.

It is found in the secreted. It carries out the reaction Hydrolysis of terminal, non-reducing beta-D-glucosyl residues with release of beta-D-glucose.. It functions in the pathway glycan metabolism; cellulose degradation. Its function is as follows. Beta-glucosidases are one of a number of cellulolytic enzymes involved in the degradation of cellulosic biomass. Catalyzes the last step releasing glucose from the inhibitory cellobiose. This chain is Probable beta-glucosidase M (bglM), found in Aspergillus niger (strain ATCC MYA-4892 / CBS 513.88 / FGSC A1513).